Reading from the N-terminus, the 543-residue chain is Protein phosphatase 1G (543 aa).

A lipid anchor (N-myristoyl glycine) is attached at G2. At R22 the chain carries Omega-N-methylarginine. The 478-residue stretch at 26–503 (PYGFSAMQGW…DNMTCIIICF (478 aa)) folds into the PPM-type phosphatase domain. D60 and G61 together coordinate Mn(2+). Disordered regions lie at residues 116–139 (QIAG…DVDN) and 163–326 (NCHK…SDSG). Phosphothreonine is present on T122. Acidic residues predominate over residues 123-139 (EDEDEKEKVADEDDVDN). S183 carries the phosphoserine modification. Residues 259–310 (DSEDESDEAEEEEEDSEECSEEEDGYSSEEAENEEDEDDTEEAEEDDEEEEM) are compositionally biased toward acidic residues. N6-acetyllysine is present on K381. Residues D439 and D494 each coordinate Mn(2+). Residues 508–543 (TAAPQPESGKRKLEEVLSTEGAEENGNSDKKKAKRD) form a disordered region. S525 is subject to Phosphoserine.

This sequence belongs to the PP2C family. Interacts with NOL3; may dephosphorylate NOL3. Mg(2+) serves as cofactor. It depends on Mn(2+) as a cofactor.

It localises to the cytoplasm. The protein localises to the membrane. It catalyses the reaction O-phospho-L-seryl-[protein] + H2O = L-seryl-[protein] + phosphate. It carries out the reaction O-phospho-L-threonyl-[protein] + H2O = L-threonyl-[protein] + phosphate. This is Protein phosphatase 1G (PPM1G) from Bos taurus (Bovine).